Reading from the N-terminus, the 297-residue chain is tRNA dimethylallyltransferase (297 aa).

ATP is bound at residue 15–22 (GPTASGKS). Residue 17–22 (TASGKS) coordinates substrate. Interaction with substrate tRNA stretches follow at residues 40 to 43 (DSMQ) and 164 to 168 (QRIVR).

The protein belongs to the IPP transferase family. As to quaternary structure, monomer. Mg(2+) is required as a cofactor.

The catalysed reaction is adenosine(37) in tRNA + dimethylallyl diphosphate = N(6)-dimethylallyladenosine(37) in tRNA + diphosphate. In terms of biological role, catalyzes the transfer of a dimethylallyl group onto the adenine at position 37 in tRNAs that read codons beginning with uridine, leading to the formation of N6-(dimethylallyl)adenosine (i(6)A). The sequence is that of tRNA dimethylallyltransferase from Rhizobium etli (strain ATCC 51251 / DSM 11541 / JCM 21823 / NBRC 15573 / CFN 42).